The sequence spans 349 residues: Transmembrane protein 255A (349 aa).

A run of 4 helical transmembrane segments spans residues 30–50 (IYVT…GLAA), 57–77 (VTVG…LGII), 89–109 (LVAS…CAIV), and 226–246 (TILN…LGGF). A disordered region spans residues 301 to 329 (VFPSSPPSGLSDEPQSASPSPSYMWSSSA). Over residues 316–329 (SASPSPSYMWSSSA) the composition is skewed to low complexity.

The protein belongs to the TMEM255 family.

It is found in the membrane. The chain is Transmembrane protein 255A (TMEM255A) from Macaca fascicularis (Crab-eating macaque).